Consider the following 182-residue polypeptide: Type-1 fimbrial protein, A chain (182 aa).

Positions 1–23 are cleaved as a signal peptide; it reads MKIKTLAIVVLSALSLSSTAALA. An intrachain disulfide couples C44 to C84.

It belongs to the fimbrial protein family.

The protein localises to the fimbrium. Its function is as follows. Fimbriae (also called pili), polar filaments radiating from the surface of the bacterium to a length of 0.5-1.5 micrometers and numbering 100-300 per cell, enable bacteria to colonize the epithelium of specific host organs. This Escherichia coli (strain K12) protein is Type-1 fimbrial protein, A chain (fimA).